Reading from the N-terminus, the 133-residue chain is MKPARFAPRAARKGNPATGLAAYRLGLRAETLAVLLLRLKGYRVVARRLKTPAGEIDLVVRRGRALAVVEVKARGEGDAAAEALLPRQQRRLERAAAHLLGRYPHFADLDLRFDVVLIVPRRWPRHLADAWRP.

It belongs to the UPF0102 family.

The protein is UPF0102 protein Plav_3586 of Parvibaculum lavamentivorans (strain DS-1 / DSM 13023 / NCIMB 13966).